Reading from the N-terminus, the 356-residue chain is Phosphate acyltransferase (356 aa).

Belongs to the PlsX family. Homodimer. Probably interacts with PlsY.

Its subcellular location is the cytoplasm. The enzyme catalyses a fatty acyl-[ACP] + phosphate = an acyl phosphate + holo-[ACP]. It participates in lipid metabolism; phospholipid metabolism. Functionally, catalyzes the reversible formation of acyl-phosphate (acyl-PO(4)) from acyl-[acyl-carrier-protein] (acyl-ACP). This enzyme utilizes acyl-ACP as fatty acyl donor, but not acyl-CoA. The polypeptide is Phosphate acyltransferase (Xanthobacter autotrophicus (strain ATCC BAA-1158 / Py2)).